Here is a 126-residue protein sequence, read N- to C-terminus: Holo-[acyl-carrier-protein] synthase (126 aa).

Mg(2+) contacts are provided by D9 and E58.

The protein belongs to the P-Pant transferase superfamily. AcpS family. The cofactor is Mg(2+).

It localises to the cytoplasm. The enzyme catalyses apo-[ACP] + CoA = holo-[ACP] + adenosine 3',5'-bisphosphate + H(+). Its function is as follows. Transfers the 4'-phosphopantetheine moiety from coenzyme A to a Ser of acyl-carrier-protein. This Hamiltonella defensa subsp. Acyrthosiphon pisum (strain 5AT) protein is Holo-[acyl-carrier-protein] synthase.